Here is a 92-residue protein sequence, read N- to C-terminus: Small ribosomal subunit protein uS19c (92 aa).

Belongs to the universal ribosomal protein uS19 family.

Its subcellular location is the plastid. It is found in the chloroplast. Functionally, protein S19 forms a complex with S13 that binds strongly to the 16S ribosomal RNA. This chain is Small ribosomal subunit protein uS19c, found in Angiopteris evecta (Mule's foot fern).